Consider the following 266-residue polypeptide: 3-deoxy-manno-octulosonate cytidylyltransferase 1 (266 aa).

It belongs to the KdsB family.

Its subcellular location is the cytoplasm. The enzyme catalyses 3-deoxy-alpha-D-manno-oct-2-ulosonate + CTP = CMP-3-deoxy-beta-D-manno-octulosonate + diphosphate. The protein operates within nucleotide-sugar biosynthesis; CMP-3-deoxy-D-manno-octulosonate biosynthesis; CMP-3-deoxy-D-manno-octulosonate from 3-deoxy-D-manno-octulosonate and CTP: step 1/1. Its pathway is bacterial outer membrane biogenesis; lipopolysaccharide biosynthesis. In terms of biological role, activates KDO (a required 8-carbon sugar) for incorporation into bacterial lipopolysaccharide in Gram-negative bacteria. This is 3-deoxy-manno-octulosonate cytidylyltransferase 1 from Paraburkholderia phytofirmans (strain DSM 17436 / LMG 22146 / PsJN) (Burkholderia phytofirmans).